A 355-amino-acid polypeptide reads, in one-letter code: UDP-N-acetylglucosamine--N-acetylmuramyl-(pentapeptide) pyrophosphoryl-undecaprenol N-acetylglucosamine transferase (355 aa).

Residues 15 to 17 (TGG), Asn127, Arg163, Ser191, Ile245, 264 to 269 (ALTVSE), and Gln289 each bind UDP-N-acetyl-alpha-D-glucosamine.

The protein belongs to the glycosyltransferase 28 family. MurG subfamily.

It is found in the cell inner membrane. The enzyme catalyses di-trans,octa-cis-undecaprenyl diphospho-N-acetyl-alpha-D-muramoyl-L-alanyl-D-glutamyl-meso-2,6-diaminopimeloyl-D-alanyl-D-alanine + UDP-N-acetyl-alpha-D-glucosamine = di-trans,octa-cis-undecaprenyl diphospho-[N-acetyl-alpha-D-glucosaminyl-(1-&gt;4)]-N-acetyl-alpha-D-muramoyl-L-alanyl-D-glutamyl-meso-2,6-diaminopimeloyl-D-alanyl-D-alanine + UDP + H(+). It participates in cell wall biogenesis; peptidoglycan biosynthesis. Cell wall formation. Catalyzes the transfer of a GlcNAc subunit on undecaprenyl-pyrophosphoryl-MurNAc-pentapeptide (lipid intermediate I) to form undecaprenyl-pyrophosphoryl-MurNAc-(pentapeptide)GlcNAc (lipid intermediate II). The protein is UDP-N-acetylglucosamine--N-acetylmuramyl-(pentapeptide) pyrophosphoryl-undecaprenol N-acetylglucosamine transferase of Yersinia enterocolitica serotype O:8 / biotype 1B (strain NCTC 13174 / 8081).